Here is a 476-residue protein sequence, read N- to C-terminus: Probable cytosol aminopeptidase (476 aa).

Lys242 and Asp247 together coordinate Mn(2+). Lys254 is a catalytic residue. Mn(2+)-binding residues include Asp265, Asp324, and Glu326. Residue Arg328 is part of the active site.

This sequence belongs to the peptidase M17 family. It depends on Mn(2+) as a cofactor.

The protein localises to the cytoplasm. The catalysed reaction is Release of an N-terminal amino acid, Xaa-|-Yaa-, in which Xaa is preferably Leu, but may be other amino acids including Pro although not Arg or Lys, and Yaa may be Pro. Amino acid amides and methyl esters are also readily hydrolyzed, but rates on arylamides are exceedingly low.. It carries out the reaction Release of an N-terminal amino acid, preferentially leucine, but not glutamic or aspartic acids.. In terms of biological role, presumably involved in the processing and regular turnover of intracellular proteins. Catalyzes the removal of unsubstituted N-terminal amino acids from various peptides. The sequence is that of Probable cytosol aminopeptidase from Treponema denticola (strain ATCC 35405 / DSM 14222 / CIP 103919 / JCM 8153 / KCTC 15104).